Consider the following 247-residue polypeptide: tRNA pseudouridine synthase A (247 aa).

D53 acts as the Nucleophile in catalysis. Y111 contacts substrate.

This sequence belongs to the tRNA pseudouridine synthase TruA family. In terms of assembly, homodimer.

The enzyme catalyses uridine(38/39/40) in tRNA = pseudouridine(38/39/40) in tRNA. Formation of pseudouridine at positions 38, 39 and 40 in the anticodon stem and loop of transfer RNAs. The protein is tRNA pseudouridine synthase A of Bacillus pumilus (strain SAFR-032).